The sequence spans 502 residues: MVAQRYRTRFAPSPTGYLHVGGLRTALYNYLFVKKMKGDFVLRIEDTDRSRRVEGAQQNLLKTLEWAGIVPDESPELGGDFGPYIQSERLEIYKKYCDELLEGKYAYYCFATSEELEENRQLQLKQGLQPKYNRKWLPEEMGGSMPSSEIRKKMEQNAPYVIRMKVPDYVSVWFEDLIRGPVEFDSSTIDDQVLMKSDGFPTYHFASVIDDHLMEFTHIIRGEEWLPSMPKHLLLYEFFGWEPPKFAHLPLLLNPDRSKLSKRQGDVAVEDYIRKGYSAEAIVNFVAMLGWNEGEGTEQEVYSLEQLVERFSLERVGKAGAIFNVDKLNWLEKQYIKSRSADRIIAVIKPLLMAELEKRPTAMHESVITSDLYLEQVIELMRERVGFEHEFVTFSPYFFFDPETYEEEGVRKRWTAETNTLLREFVTVLASLDAFTAEAIETELKAFVAPKGLKAAALIHPLRILCSGVSFGPSLYHMLEVLGKDAVIRRISRGIETVVCLS.

Positions 12-22 (PSPTGYLHVGG) match the 'HIGH' region motif. Residues 259 to 263 (KLSKR) carry the 'KMSKS' region motif. Position 262 (K262) interacts with ATP.

It belongs to the class-I aminoacyl-tRNA synthetase family. Glutamate--tRNA ligase type 1 subfamily. Monomer.

The protein resides in the cytoplasm. It catalyses the reaction tRNA(Glu) + L-glutamate + ATP = L-glutamyl-tRNA(Glu) + AMP + diphosphate. In terms of biological role, catalyzes the attachment of glutamate to tRNA(Glu) in a two-step reaction: glutamate is first activated by ATP to form Glu-AMP and then transferred to the acceptor end of tRNA(Glu). This is Glutamate--tRNA ligase from Chlorobium phaeobacteroides (strain DSM 266 / SMG 266 / 2430).